Consider the following 375-residue polypeptide: UDP-N-acetylglucosamine--N-acetylmuramyl-(pentapeptide) pyrophosphoryl-undecaprenol N-acetylglucosamine transferase (375 aa).

Residues 15 to 17 (TGG), Asn-126, Arg-169, Ser-197, and Gln-298 each bind UDP-N-acetyl-alpha-D-glucosamine.

The protein belongs to the glycosyltransferase 28 family. MurG subfamily.

It is found in the cell inner membrane. The catalysed reaction is di-trans,octa-cis-undecaprenyl diphospho-N-acetyl-alpha-D-muramoyl-L-alanyl-D-glutamyl-meso-2,6-diaminopimeloyl-D-alanyl-D-alanine + UDP-N-acetyl-alpha-D-glucosamine = di-trans,octa-cis-undecaprenyl diphospho-[N-acetyl-alpha-D-glucosaminyl-(1-&gt;4)]-N-acetyl-alpha-D-muramoyl-L-alanyl-D-glutamyl-meso-2,6-diaminopimeloyl-D-alanyl-D-alanine + UDP + H(+). The protein operates within cell wall biogenesis; peptidoglycan biosynthesis. Cell wall formation. Catalyzes the transfer of a GlcNAc subunit on undecaprenyl-pyrophosphoryl-MurNAc-pentapeptide (lipid intermediate I) to form undecaprenyl-pyrophosphoryl-MurNAc-(pentapeptide)GlcNAc (lipid intermediate II). The sequence is that of UDP-N-acetylglucosamine--N-acetylmuramyl-(pentapeptide) pyrophosphoryl-undecaprenol N-acetylglucosamine transferase from Rhodopseudomonas palustris (strain BisB18).